Consider the following 178-residue polypeptide: Small ribosomal subunit protein uS4 (178 aa).

The 63-residue stretch at arginine 104–histidine 166 folds into the S4 RNA-binding domain. The interval asparagine 158–glutamine 178 is disordered.

The protein belongs to the universal ribosomal protein uS4 family. Part of the 30S ribosomal subunit. Contacts protein S5. The interaction surface between S4 and S5 is involved in control of translational fidelity.

In terms of biological role, one of the primary rRNA binding proteins, it binds directly to 16S rRNA where it nucleates assembly of the body of the 30S subunit. Functionally, with S5 and S12 plays an important role in translational accuracy. The polypeptide is Small ribosomal subunit protein uS4 (Methanococcus maripaludis (strain DSM 14266 / JCM 13030 / NBRC 101832 / S2 / LL)).